Here is a 214-residue protein sequence, read N- to C-terminus: Ribosomal RNA large subunit methyltransferase E (214 aa).

Gly60, Trp62, Asp86, Asp102, and Asp127 together coordinate S-adenosyl-L-methionine. Residue Lys167 is the Proton acceptor of the active site.

Belongs to the class I-like SAM-binding methyltransferase superfamily. RNA methyltransferase RlmE family.

The protein resides in the cytoplasm. The enzyme catalyses uridine(2552) in 23S rRNA + S-adenosyl-L-methionine = 2'-O-methyluridine(2552) in 23S rRNA + S-adenosyl-L-homocysteine + H(+). Functionally, specifically methylates the uridine in position 2552 of 23S rRNA at the 2'-O position of the ribose in the fully assembled 50S ribosomal subunit. This is Ribosomal RNA large subunit methyltransferase E from Herminiimonas arsenicoxydans.